A 168-amino-acid chain; its full sequence is Small ribosomal subunit protein uS9 (168 aa).

Residues 1-38 (MAKIADSIDSAQADSVENVESYSTETPESAAPAAPRPV) form a disordered region. Polar residues predominate over residues 9–22 (DSAQADSVENVESY). The segment covering 23-37 (STETPESAAPAAPRP) has biased composition (low complexity).

This sequence belongs to the universal ribosomal protein uS9 family.

The sequence is that of Small ribosomal subunit protein uS9 from Leifsonia xyli subsp. xyli (strain CTCB07).